Here is a 1292-residue protein sequence, read N- to C-terminus: Zinc finger protein 423 (1292 aa).

Basic residues predominate over residues 1-11 (MSRRKQAKPRS). 3 disordered regions span residues 1 to 21 (MSRR…EASD), 33 to 70 (AGGL…EDVE), and 95 to 125 (AHRC…SPTQ). Basic and acidic residues predominate over residues 41-54 (ECDRKTSRALEDRN). Ser55 and Ser58 each carry phosphoserine. A C2H2-type 1; degenerate zinc finger spans residues 75–101 (YTCDHCQQDFESLADLTDHRAHRCPGD). Over residues 110 to 125 (WVASSPSSKDVASPTQ) the composition is skewed to polar residues. 7 C2H2-type zinc fingers span residues 146 to 168 (YPCQ…EQIH), 174 to 196 (FKCT…IKLH), 202 to 224 (YHCH…LKTH), 230 to 252 (FKCS…MQAH), 271 to 294 (FMCD…LTLH), 303 to 326 (LQCI…HQAH), and 331 to 353 (HKCP…LDSH). The segment at 354 to 407 (RQPDSSNHSVSPDPVLGSVASMSSATPDSSASVERGSTPDSTLKPLRGQKKMRD) is disordered. Residues 371–385 (SVASMSSATPDSSAS) are compositionally biased toward low complexity. The segment at 417–441 (YSCPYCSKRDFTSLAVLEIHLKTIH) adopts a C2H2-type 9; degenerate zinc-finger fold. C2H2-type zinc fingers lie at residues 449–472 (HTCQ…RKLH), 488–511 (FHCN…RVSH), and 525–548 (FFCN…QQAH). The C2H2-type 13; atypical zinc finger occupies 571–596 (YSCPYCTNSPIFGSILKLTKHIKENH). The interval 598–635 (NIPLAHSKKSKAEQSPVSSDVEVSSPKRQRLSGSANSI) is disordered. Residue Ser612 is modified to Phosphoserine. Low complexity predominate over residues 612–623 (SPVSSDVEVSSP). 7 C2H2-type zinc fingers span residues 640-662 (YPCN…LKLH), 670-692 (QACP…LTVH), 700-723 (YVCE…LDMH), 728-751 (YHCT…AVKH), 758-781 (YRCT…KHSH), 789-811 (HKCI…ITTH), and 815-838 (YNCR…REKH). The C2H2-type 21; degenerate zinc finger occupies 894 to 916 (YGCDICGAAYTMEVLLQNHRLRD). 3 consecutive C2H2-type zinc fingers follow at residues 938-960 (HKCN…LQTH), 967-989 (YMCP…KVTH), and 1028-1050 (FRCV…GTFH). The residue at position 1062 (Ser1062) is a Phosphoserine. The segment at 1072–1090 (YKCALCLKEFRSKQDLVRL) adopts a C2H2-type 25; degenerate zinc-finger fold. 5 C2H2-type zinc fingers span residues 1128 to 1151 (LRCP…QVDH), 1176 to 1198 (YQCI…VANH), 1206 to 1228 (HECK…LIEH), 1237 to 1260 (FKCP…FAVH), and 1267 to 1290 (YDCS…MSQH). Over residues 1144–1155 (ESHMQVDHRDLT) the composition is skewed to basic and acidic residues. Residues 1144 to 1171 (ESHMQVDHRDLTPETSGPRKGAQTSPVP) form a disordered region.

It belongs to the krueppel C2H2-type zinc-finger protein family. In terms of assembly, homodimer. Interacts with SMAD1 and SMAD4. Interacts with EBF1. Interacts with PARP1. Interacts with CEP290. As to expression, within the cerebellum, Zfp423 is expressed in both ventricular and external germinal zones. Transiently expressed in newly differentiating olfactory-receptor neurons.

Its subcellular location is the nucleus. Transcription factor that can both act as an activator or a repressor depending on the context. Plays a central role in BMP signaling and olfactory neurogenesis. Associates with SMADs in response to BMP2 leading to activate transcription of BMP target genes. Acts as a transcriptional repressor via its interaction with EBF1, a transcription factor involved in terminal olfactory receptor neurons differentiation; this interaction preventing EBF1 to bind DNA and activate olfactory-specific genes. Involved in olfactory neurogenesis by participating in a developmental switch that regulates the transition from differentiation to maturation in olfactory receptor neurons. Controls proliferation and differentiation of neural precursors in cerebellar vermis formation. The protein is Zinc finger protein 423 (Znf423) of Mus musculus (Mouse).